The following is a 248-amino-acid chain: Carbohydrate deacetylase 2 (248 aa).

Mg(2+)-binding residues include His59 and His123.

The protein belongs to the YdjC deacetylase family. Homodimer. Requires Mg(2+) as cofactor.

Its function is as follows. Probably catalyzes the deacetylation of acetylated carbohydrates an important step in the degradation of oligosaccharides. The polypeptide is Carbohydrate deacetylase 2 (Listeria innocua serovar 6a (strain ATCC BAA-680 / CLIP 11262)).